The following is a 530-amino-acid chain: Chaperonin GroEL (530 aa).

Residues 30–33 (TLGP), K51, 87–91 (DGTTT), G415, and D495 contribute to the ATP site.

Belongs to the chaperonin (HSP60) family. Forms a cylinder of 14 subunits composed of two heptameric rings stacked back-to-back. Interacts with the co-chaperonin GroES.

Its subcellular location is the cytoplasm. It carries out the reaction ATP + H2O + a folded polypeptide = ADP + phosphate + an unfolded polypeptide.. Together with its co-chaperonin GroES, plays an essential role in assisting protein folding. The GroEL-GroES system forms a nano-cage that allows encapsulation of the non-native substrate proteins and provides a physical environment optimized to promote and accelerate protein folding. The polypeptide is Chaperonin GroEL (Carsonella ruddii (strain PV)).